The chain runs to 485 residues: Glycogen synthase (485 aa).

An ADP-alpha-D-glucose-binding site is contributed by Lys-15.

This sequence belongs to the glycosyltransferase 1 family. Bacterial/plant glycogen synthase subfamily.

It catalyses the reaction [(1-&gt;4)-alpha-D-glucosyl](n) + ADP-alpha-D-glucose = [(1-&gt;4)-alpha-D-glucosyl](n+1) + ADP + H(+). The protein operates within glycan biosynthesis; glycogen biosynthesis. Synthesizes alpha-1,4-glucan chains using ADP-glucose. In Geobacillus thermodenitrificans (strain NG80-2), this protein is Glycogen synthase.